Consider the following 122-residue polypeptide: Large ribosomal subunit protein uL14 (122 aa).

The protein belongs to the universal ribosomal protein uL14 family. In terms of assembly, part of the 50S ribosomal subunit. Forms a cluster with proteins L3 and L19. In the 70S ribosome, L14 and L19 interact and together make contacts with the 16S rRNA in bridges B5 and B8.

In terms of biological role, binds to 23S rRNA. Forms part of two intersubunit bridges in the 70S ribosome. This chain is Large ribosomal subunit protein uL14, found in Laribacter hongkongensis (strain HLHK9).